The primary structure comprises 603 residues: Serine palmitoyltransferase 2 (603 aa).

A helical transmembrane segment spans residues 90 to 107 (YYYVVATYLTYLVLIIIG). At Lys-398 the chain carries N6-(pyridoxal phosphate)lysine.

This sequence belongs to the class-II pyridoxal-phosphate-dependent aminotransferase family. As to quaternary structure, lcb1 and lcb2 encode essential subunits of the enzyme and form a heterodimer. The cofactor is pyridoxal 5'-phosphate.

It is found in the cytoplasm. Its subcellular location is the endoplasmic reticulum. The protein localises to the membrane. It carries out the reaction L-serine + hexadecanoyl-CoA + H(+) = 3-oxosphinganine + CO2 + CoA. The protein operates within lipid metabolism; sphingolipid metabolism. Its function is as follows. Catalytic subunit of serine palmitoyltransferase (SPT), which catalyzes the committed step in the synthesis of sphingolipids, the condensation of serine with palmitoyl CoA to form the long chain base 3-ketosphinganine. This chain is Serine palmitoyltransferase 2 (lcb2), found in Schizosaccharomyces pombe (strain 972 / ATCC 24843) (Fission yeast).